Reading from the N-terminus, the 940-residue chain is UvrABC system protein A (940 aa).

An ATP-binding site is contributed by 31–38 (GLSGSGKS). Residues 252 to 279 (CPHCGYSMRELEPRLFSFNNPAGACPTC) form a C4-type zinc finger. ABC transporter domains follow at residues 309 to 586 (WDQK…PNSL) and 606 to 936 (KDAK…RFLK). 639–646 (GVSGSGKS) is a binding site for ATP. The C4-type zinc-finger motif lies at 739–765 (CEACQGDGVIKVEMHFLPDVYVPCDVC).

The protein belongs to the ABC transporter superfamily. UvrA family. In terms of assembly, forms a heterotetramer with UvrB during the search for lesions.

Its subcellular location is the cytoplasm. Its function is as follows. The UvrABC repair system catalyzes the recognition and processing of DNA lesions. UvrA is an ATPase and a DNA-binding protein. A damage recognition complex composed of 2 UvrA and 2 UvrB subunits scans DNA for abnormalities. When the presence of a lesion has been verified by UvrB, the UvrA molecules dissociate. The sequence is that of UvrABC system protein A from Vibrio cholerae serotype O1 (strain ATCC 39315 / El Tor Inaba N16961).